We begin with the raw amino-acid sequence, 417 residues long: NADH-quinone oxidoreductase subunit D (417 aa).

It belongs to the complex I 49 kDa subunit family. In terms of assembly, NDH-1 is composed of 14 different subunits. Subunits NuoB, C, D, E, F, and G constitute the peripheral sector of the complex.

The protein resides in the cell inner membrane. The enzyme catalyses a quinone + NADH + 5 H(+)(in) = a quinol + NAD(+) + 4 H(+)(out). NDH-1 shuttles electrons from NADH, via FMN and iron-sulfur (Fe-S) centers, to quinones in the respiratory chain. The immediate electron acceptor for the enzyme in this species is believed to be ubiquinone. Couples the redox reaction to proton translocation (for every two electrons transferred, four hydrogen ions are translocated across the cytoplasmic membrane), and thus conserves the redox energy in a proton gradient. This chain is NADH-quinone oxidoreductase subunit D, found in Hydrogenovibrio crunogenus (strain DSM 25203 / XCL-2) (Thiomicrospira crunogena).